A 339-amino-acid polypeptide reads, in one-letter code: Immunoglobulin-binding protein 1 (339 aa).

The residue at position 2 (Ala2) is an N-acetylalanine. One can recognise a UIM domain in the interval 46-60 (LDLLEKAAEMLSQLD). The interval 98–202 (RLDHLQRARE…YLLHLQRWID (105 aa)) is interaction with PPP2CA. Disordered stretches follow at residues 221–243 (RDSS…VKPF) and 289–339 (APEE…QNMG). The interval 225-290 (REASTSNSSR…PDQGIAKAAP (66 aa)) is interaction with MID1. Lys241 bears the N6-acetyllysine mark. A compositionally biased stretch (acidic residues) spans 301–312 (EEQEEKEEEDDE). The span at 313 to 329 (QTLHRAREWDDWKDTHP) shows a compositional bias: basic and acidic residues.

Belongs to the IGBP1/TAP42 family. In terms of assembly, interacts with partially folded PPP2CA, but not with the fully active protein. Interacts with PPP2CB, and with PP4 and PP6. Interacts with MID1 and MID2. Interacts with ubiquitin. Phosphorylated. In terms of processing, monoubiquitination by MID1 triggers calpain-mediated cleavage and switches IGBP1 activity from protective to destructive. In terms of tissue distribution, ubiquitously expressed with highest levels in heart, skeletal muscle and pancreas.

It is found in the cytoplasm. Its function is as follows. Associated to surface IgM-receptor; may be involved in signal transduction. Involved in regulation of the catalytic activity of the phosphatases PP2A, PP4 and PP6 by protecting their partially folded catalytic subunits from degradative polyubiquitination until they associate with regulatory subunits. The polypeptide is Immunoglobulin-binding protein 1 (IGBP1) (Homo sapiens (Human)).